Reading from the N-terminus, the 149-residue chain is Oligosaccharyltransferase complex subunit ostc-B (149 aa).

Over 1–32 the chain is Cytoplasmic; the sequence is MESLYRIPFTVLECPNLKLKKPSWLHMPSAMT. A helical membrane pass occupies residues 33–53; sequence VYAMVVVSYFLITGGIIYDVI. The Extracellular segment spans residues 54-83; it reads VEPPSVGSMTDEHGHQRPVAFLAYRVNGQY. The chain crosses the membrane as a helical span at residues 84 to 104; sequence IMEGLASSFLFTMGGLGFIIL. Residues 105–117 are Cytoplasmic-facing; the sequence is DRSNAPNIPKLNR. A helical transmembrane segment spans residues 118–138; sequence FLLLFIGFVCVLLSFFMARVF. At 139–149 the chain is on the extracellular side; the sequence is MRMKLPGYLMG.

This sequence belongs to the OSTC family. As to quaternary structure, specific component of the STT3A-containing form of the oligosaccharyltransferase (OST) complex.

The protein resides in the membrane. Its pathway is protein modification; protein glycosylation. In terms of biological role, specific component of the STT3A-containing form of the oligosaccharyl transferase (OST) complex that catalyzes the initial transfer of a defined glycan (Glc(3)Man(9)GlcNAc(2) in eukaryotes) from the lipid carrier dolichol-pyrophosphate to an asparagine residue within an Asn-X-Ser/Thr consensus motif in nascent polypeptide chains, the first step in protein N-glycosylation. N-glycosylation occurs cotranslationally and the complex associates with the Sec61 complex at the channel-forming translocon complex that mediates protein translocation across the endoplasmic reticulum (ER). All subunits are required for a maximal enzyme activity. This Xenopus laevis (African clawed frog) protein is Oligosaccharyltransferase complex subunit ostc-B.